Here is a 675-residue protein sequence, read N- to C-terminus: MAEPALLPAAQMERLAPGPLASPCPRIPRARIARRCAQRWADLGCSSGPSSGRMDQLPQKNLLRLHPAGSAGCSTGVESSSMDGFWMEVEQIQQRDELREEDSGGNEGQLPEEGEAESQWLQDTGLSGLLGGLGLDGDHQELLSTLTQTQVAAVCRRLDIYARSVRRQHKTPVRDVRDVFGVFNSGKMSSENGDSGMKGAQLSSGASKFPPAAEPGGLQEQAGREEAFNMDSAYSEQAAVLLQRSRPSRGGTSAWGKCSLPKFTVPKGRLGVTRIGDLSLQDMRKVPSLALIELTALCDILGLDLKRSKAGKWKAAETRLFGVPLDSLLEADHKVLPSTQVPLVLQALLSCLEKRGLDMEGILRVPGSQARVKGLEQKLERDFYAGLFSWDEVHHNDASDLLKRFIRKLPTPLLTAEYLPAFAVVPNIPNLKQRLQVLHLLILILPEPNRNALKALLEFLRKVVAREQHNKMTLRNVSTVMAPNLFLHQGRPPKLPKGKEKQLAEGAAEVVQIMVHYQDLLWTVASFLVAQVRKLNDSSSRRPQLCDAGLKTWLRRMHADRDKAGDGLEATPKVAKIQVVWPIKDPLKVPLTPSTKVAHVLRQFTEHLSPGSKGQEDSEDMDSLLLHHRSMESANILLYEVGGNINEHRLDPDAYLLDLYRANPHGEWVLKQNPT.

Disordered regions lie at residues 95–118 (RDELREEDSGGNEGQLPEEGEAES) and 187–218 (KMSSENGDSGMKGAQLSSGASKFPPAAEPGGL). The span at 103–116 (SGGNEGQLPEEGEA) shows a compositional bias: acidic residues. A Rho-GAP domain is found at 323 to 522 (VPLDSLLEAD…IMVHYQDLLW (200 aa)).

GTPase activator for the Rho-type GTPases by converting them to an inactive GDP-bound state. This is Rho GTPase-activating protein 40 from Homo sapiens (Human).